Reading from the N-terminus, the 25-residue chain is FFGWLIKGAIHAGKAIHGLIHRRRH.

His25 is subject to Histidine amide.

As to expression, gill. Localized in certain epithelial cells lining the surface of secondary lamellae and eosinophilic granule cell-like cells at the base of secondary lamellae.

The protein resides in the secreted. In terms of biological role, has antibacterial activity against Gram-positive bacteria B.subtilis ATCC 6633, L.garvieae ATCC 49156 and S.iniae F-8502, and Gram-negative bacteria E.coli WT-2, V.anguillarum ATCC 19264, V.penaeicida KHA, V.harveyi ATCC 14126, V.vulnificus ATCC 33148, A.salmonicida NCMB 1102 and P.putida ATCC 12633. Has hemolytic activity against human red blood cells. Seems to disrupt the membranes by adopting an alpha helical conformation. May play a significant role in innate host defense. This is Chrysophsin-1 from Pagrus major (Red sea bream).